The sequence spans 464 residues: Citrate synthase, mitochondrial (464 aa).

The N-terminal 27 residues, 1–27 (MALLTAATRLLGAKNSSCLVLAARHAS), are a transit peptide targeting the mitochondrion. The SIFI-degron signature appears at 2–21 (ALLTAATRLLGAKNSSCLVL). N6-succinyllysine is present on lysine 57. Lysine 76 is subject to N6-acetyllysine; alternate. Lysine 76 carries the N6-succinyllysine; alternate modification. N6-succinyllysine occurs at positions 103 and 193. Serine 226 is modified (phosphoserine). Residue histidine 301 is part of the active site. N6-acetyllysine; alternate occurs at positions 321 and 327. Residues lysine 321 and lysine 327 each carry the N6-succinyllysine; alternate modification. Residue histidine 347 is part of the active site. Arginine 356 provides a ligand contact to oxaloacetate. Lysine 375 carries the N6-acetyllysine; alternate modification. Lysine 375 carries the N6-succinyllysine; alternate modification. Lysine 382 bears the N6-acetyllysine mark. At lysine 393 the chain carries N6-acetyllysine; alternate. Lysine 393 carries the post-translational modification N6-succinyllysine; alternate. Position 395 is an N6,N6,N6-trimethyllysine (lysine 395). Aspartate 402 is an active-site residue. The oxaloacetate site is built by arginine 428 and arginine 448. At lysine 450 the chain carries N6-succinyllysine. Lysine 459 is subject to N6-acetyllysine; alternate. Lysine 459 bears the N6-succinyllysine; alternate mark.

Belongs to the citrate synthase family. In terms of assembly, homodimer. In terms of processing, methylated. Trimethylation at Lys-395 by CSKMT decreases citrate synthase activity. Post-translationally, in response to mitochondrial stress, the precursor protein is ubiquitinated by the SIFI complex in the cytoplasm before mitochondrial import, leading to its degradation. Within the SIFI complex, UBR4 initiates ubiquitin chain that are further elongated or branched by KCMF1.

It is found in the mitochondrion matrix. The catalysed reaction is oxaloacetate + acetyl-CoA + H2O = citrate + CoA + H(+). It participates in carbohydrate metabolism; tricarboxylic acid cycle; isocitrate from oxaloacetate: step 1/2. In terms of biological role, key enzyme of the Krebs tricarboxylic acid cycle which catalyzes the synthesis of citrate from acetyl coenzyme A and oxaloacetate. This Mus musculus (Mouse) protein is Citrate synthase, mitochondrial (Cs).